The sequence spans 436 residues: Cytochrome b5-related protein (436 aa).

The Cytochrome b5 heme-binding domain occupies 16-100 (PTYRNSALIT…IAKYKVRDAA (85 aa)). His-59 and His-82 together coordinate heme.

In terms of tissue distribution, muscle.

May play a role in muscle cell metabolism. The polypeptide is Cytochrome b5-related protein (Cyt-b5-r) (Drosophila melanogaster (Fruit fly)).